The chain runs to 477 residues: Oxidative stress-induced growth inhibitor 1 (477 aa).

S12 is subject to Phosphoserine.

It belongs to the OKL38 family. NADPH is required as a cofactor. As to expression, ubiquitous. Highest expression in the ovary, testis, kidney, skeletal muscle and liver.

It is found in the midbody. In terms of biological role, monooxygenase catalytic activity. Involved in regulation of cytokinesis; promotes RHOA activity, probably acting locally at the midbody in late cytokinesis. Monooxygenase activity is involved in stabilizing transient structures between daughter cells, termed intercellular bridges, before abscission. Regulates differentiation and proliferation through the regulation of cell death. The sequence is that of Oxidative stress-induced growth inhibitor 1 from Homo sapiens (Human).